Consider the following 734-residue polypeptide: Oligopeptide transporter 2 (734 aa).

14 helical membrane-spanning segments follow: residues 44 to 64 (MWFL…FFGY), 68 to 88 (PLMI…KLMA), 125 to 145 (GAGF…IMAF), 152 to 172 (FLAS…WAGI), 211 to 231 (FFVI…YLFL), 252 to 272 (LGSG…SVIA), 283 to 303 (FFAI…VIPI), 359 to 379 (FFAI…THVA), 414 to 434 (WWFY…CIFM), 442 to 462 (WWGL…VSII), 525 to 545 (MFLV…SVAW), 596 to 616 (YPAL…VWLL), 644 to 664 (ATSV…YFVF), and 677 to 697 (VLSA…YFSL).

Belongs to the oligopeptide OPT transporter (TC 2.A.67.1) family. As to expression, expressed in flowers, leaves, roots, and stems.

It localises to the membrane. In terms of biological role, involved in the translocation of tetra- and pentapeptides across the cellular membrane in an energy-dependent manner. The chain is Oligopeptide transporter 2 (OPT2) from Arabidopsis thaliana (Mouse-ear cress).